The following is a 490-amino-acid chain: Protein nucleotidyltransferase YdiU (490 aa).

Residues G94, G96, R97, K117, D129, G130, R180, and R187 each contribute to the ATP site. The active-site Proton acceptor is D256. Mg(2+) is bound by residues N257 and D266. D266 is an ATP binding site.

Belongs to the SELO family. The cofactor is Mg(2+). Mn(2+) is required as a cofactor.

The catalysed reaction is L-seryl-[protein] + ATP = 3-O-(5'-adenylyl)-L-seryl-[protein] + diphosphate. The enzyme catalyses L-threonyl-[protein] + ATP = 3-O-(5'-adenylyl)-L-threonyl-[protein] + diphosphate. It carries out the reaction L-tyrosyl-[protein] + ATP = O-(5'-adenylyl)-L-tyrosyl-[protein] + diphosphate. It catalyses the reaction L-histidyl-[protein] + UTP = N(tele)-(5'-uridylyl)-L-histidyl-[protein] + diphosphate. The catalysed reaction is L-seryl-[protein] + UTP = O-(5'-uridylyl)-L-seryl-[protein] + diphosphate. The enzyme catalyses L-tyrosyl-[protein] + UTP = O-(5'-uridylyl)-L-tyrosyl-[protein] + diphosphate. Its function is as follows. Nucleotidyltransferase involved in the post-translational modification of proteins. It can catalyze the addition of adenosine monophosphate (AMP) or uridine monophosphate (UMP) to a protein, resulting in modifications known as AMPylation and UMPylation. The polypeptide is Protein nucleotidyltransferase YdiU (Clostridium perfringens (strain SM101 / Type A)).